The following is an 843-amino-acid chain: Protein P (843 aa).

The terminal protein domain (TP) stretch occupies residues 1–177; the sequence is MPLSYQHFRK…FCGSPYSWEQ (177 aa). Residues 178 to 346 are spacer; that stretch reads DLQHGRLVIQ…YCLCHIVNLI (169 aa). Disordered stretches follow at residues 219-258 and 297-316; these read RKSR…VGVE and SSGH…RSQS. The segment at 347 to 690 is polymerase/reverse transcriptase domain (RT); the sequence is DDWGPCAEHG…YLNLYPVARQ (344 aa). The Reverse transcriptase domain maps to 357–600; sequence EHRIRTPRTP…YSLNFMGYVI (244 aa). 3 residues coordinate Mg(2+): Asp429, Asp551, and Asp552.

The protein belongs to the hepadnaviridae P protein family.

The catalysed reaction is DNA(n) + a 2'-deoxyribonucleoside 5'-triphosphate = DNA(n+1) + diphosphate. It catalyses the reaction Endonucleolytic cleavage to 5'-phosphomonoester.. Its activity is regulated as follows. Activated by host HSP70 and HSP40 in vitro to be able to bind the epsilon loop of the pgRNA. Because deletion of the RNase H region renders the protein partly chaperone-independent, the chaperones may be needed indirectly to relieve occlusion of the RNA-binding site by this domain. Inhibited by several reverse-transcriptase inhibitors: Lamivudine, Adefovir and Entecavir. Multifunctional enzyme that converts the viral RNA genome into dsDNA in viral cytoplasmic capsids. This enzyme displays a DNA polymerase activity that can copy either DNA or RNA templates, and a ribonuclease H (RNase H) activity that cleaves the RNA strand of RNA-DNA heteroduplexes in a partially processive 3'- to 5'-endonucleasic mode. Neo-synthesized pregenomic RNA (pgRNA) are encapsidated together with the P protein, and reverse-transcribed inside the nucleocapsid. Initiation of reverse-transcription occurs first by binding the epsilon loop on the pgRNA genome, and is initiated by protein priming, thereby the 5'-end of (-)DNA is covalently linked to P protein. Partial (+)DNA is synthesized from the (-)DNA template and generates the relaxed circular DNA (RC-DNA) genome. After budding and infection, the RC-DNA migrates in the nucleus, and is converted into a plasmid-like covalently closed circular DNA (cccDNA). The activity of P protein does not seem to be necessary for cccDNA generation, and is presumably released from (+)DNA by host nuclear DNA repair machinery. The polypeptide is Protein P (Hepatitis B virus genotype B1 (isolate Japan/Ry30/2002) (HBV-B)).